We begin with the raw amino-acid sequence, 314 residues long: Lysophospholipase D GDPD1 (314 aa).

Residues 1-3 are Extracellular-facing; it reads MSS. The helical transmembrane segment at 4-24 threads the bilayer; it reads TAAFCLLSTLGGYLVTSFLLL. Topologically, residues 25–195 are cytoplasmic; sequence KYPALLHQRK…VDKCYKENSD (171 aa). The region spanning 40-309 is the GP-PDE domain; the sequence is SRHISHRGGA…DYPTKLKDFL (270 aa). A divalent metal cation is bound by residues glutamate 72, aspartate 74, and histidine 87. The chain crosses the membrane as a helical span at residues 196 to 216; that stretch reads IPILFSLQRVLLILGLFFTGL. Topologically, residues 217 to 314 are extracellular; that stretch reads LPFVPIREQF…LKDFLNNFSA (98 aa).

This sequence belongs to the glycerophosphoryl diester phosphodiesterase family. Widely expressed.

It localises to the cytoplasm. The protein localises to the membrane. Its subcellular location is the perinuclear region. It is found in the endoplasmic reticulum. It carries out the reaction 1-hexadecanoyl-sn-glycero-3-phosphocholine + H2O = 1-hexadecanoyl-sn-glycero-3-phosphate + choline + H(+). It catalyses the reaction 1-hexadecanoyl-sn-glycero-3-phosphoethanolamine + H2O = 1-hexadecanoyl-sn-glycero-3-phosphate + ethanolamine + H(+). The catalysed reaction is N-hexadecanoyl-sn-glycero-3-phosphoethanolamine + H2O = N-hexadecanoylethanolamine + sn-glycerol 3-phosphate + H(+). The enzyme catalyses N-(5Z,8Z,11Z,14Z-eicosatetraenoyl)-1-(9Z-octadecenoyl)-sn-glycero-3-phosphoethanolamine + H2O = N-(5Z,8Z,11Z,14Z-eicosatetraenoyl)-ethanolamine + 1-(9Z-octadecenoyl)-sn-glycero-3-phosphate + H(+). It carries out the reaction N,1-di-(9Z-octadecenoyl)-sn-glycero-3-phosphoethanolamine + H2O = N-(9Z-octadecenoyl) ethanolamine + 1-(9Z-octadecenoyl)-sn-glycero-3-phosphate + H(+). It catalyses the reaction N-hexadecanoyl-1-(9Z-octadecenoyl)-sn-glycero-3-phosphoethanolamine + H2O = N-hexadecanoylethanolamine + 1-(9Z-octadecenoyl)-sn-glycero-3-phosphate + H(+). The catalysed reaction is a 1-O-alkyl-sn-glycero-3-phosphocholine + H2O = a 1-O-alkyl-sn-glycero-3-phosphate + choline + H(+). The enzyme catalyses 1-O-hexadecyl-sn-glycero-3-phosphocholine + H2O = 1-O-hexadecyl-sn-glycero-3-phosphate + choline + H(+). It carries out the reaction 1-(9Z-octadecenoyl)-sn-glycero-3-phosphocholine + H2O = 1-(9Z-octadecenoyl)-sn-glycero-3-phosphate + choline + H(+). It catalyses the reaction N,1-dihexadecanoyl-sn-glycero-3-phosphoethanolamine + H2O = N-hexadecanoylethanolamine + 1-hexadecanoyl-sn-glycero-3-phosphate + H(+). The catalysed reaction is 1-O-(1Z-octadecenyl)-sn-glycero-3-phospho-(N-5Z,8Z,11Z,14Z-eicosatetraenoyl)-ethanolamine + H2O = 1-O-(1Z-octadecenyl)-sn-glycero-3-phosphate + N-(5Z,8Z,11Z,14Z-eicosatetraenoyl)-ethanolamine + H(+). The enzyme catalyses 1-O-(1Z-octadecenyl)-sn-glycero-3-phospho-(N-9Z-octadecenoyl)-ethanolamine + H2O = 1-O-(1Z-octadecenyl)-sn-glycero-3-phosphate + N-(9Z-octadecenoyl) ethanolamine + H(+). It carries out the reaction 1-O-(1Z-octadecenyl)-sn-glycero-3-phospho-N-hexadecanoyl-ethanolamine + H2O = 1-O-(1Z-octadecenyl)-sn-glycero-3-phosphate + N-hexadecanoylethanolamine + H(+). Its activity is regulated as follows. Lysophospholipase D activity is increased by magnesium and manganese and inhibited by calcium in a concentration dependent manner. Loss of lysophospholipase D activity by addition of EDTA. Its function is as follows. Hydrolyzes lysoglycerophospholipids to produce lysophosphatidic acid (LPA) and the corresponding amines. Shows a preference for 1-O-alkyl-sn-glycero-3-phosphocholine (lyso-PAF), lysophosphatidylethanolamine (lyso-PE) and lysophosphatidylcholine (lyso-PC). May be involved in bioactive N-acylethanolamine biosynthesis from both N-acyl-lysoplasmenylethanolamin (N-acyl-lysoPlsEt) and N-acyl-lysophosphatidylethanolamin (N-acyl-lysoPE). In addition, hydrolyzes glycerophospho-N-acylethanolamine to N-acylethanolamine. Does not display glycerophosphodiester phosphodiesterase activity, since it cannot hydrolyze either glycerophosphoinositol or glycerophosphocholine. The polypeptide is Lysophospholipase D GDPD1 (Mus musculus (Mouse)).